Consider the following 525-residue polypeptide: GMP synthase [glutamine-hydrolyzing] (525 aa).

One can recognise a Glutamine amidotransferase type-1 domain in the interval P11–N200. C88 functions as the Nucleophile in the catalytic mechanism. Residues H174 and E176 contribute to the active site. Positions W201–R399 constitute a GMPS ATP-PPase domain. Residue S229–A235 participates in ATP binding.

Homodimer.

The catalysed reaction is XMP + L-glutamine + ATP + H2O = GMP + L-glutamate + AMP + diphosphate + 2 H(+). The protein operates within purine metabolism; GMP biosynthesis; GMP from XMP (L-Gln route): step 1/1. Functionally, catalyzes the synthesis of GMP from XMP. The chain is GMP synthase [glutamine-hydrolyzing] from Corynebacterium diphtheriae (strain ATCC 700971 / NCTC 13129 / Biotype gravis).